The following is a 147-amino-acid chain: Hemoglobin subunit beta (147 aa).

Valine 2 carries the post-translational modification N-acetylvaline. The region spanning 3-147 (HLTGEEKAAV…VANALAHKYH (145 aa)) is the Globin domain. Threonine 13 is modified (phosphothreonine). A Phosphoserine modification is found at serine 45. Residue lysine 60 is modified to N6-acetyllysine. Position 64 (histidine 64) interacts with heme b. Lysine 83 is subject to N6-acetyllysine. Histidine 93 is a binding site for heme b. Position 94 is an S-nitrosocysteine (cysteine 94). Lysine 145 is modified (N6-acetyllysine).

This sequence belongs to the globin family. As to quaternary structure, heterotetramer of two alpha chains and two beta chains. In terms of tissue distribution, red blood cells.

Its function is as follows. Involved in oxygen transport from the lung to the various peripheral tissues. In Ateles belzebuth (White-bellied spider monkey), this protein is Hemoglobin subunit beta (HBB).